Consider the following 662-residue polypeptide: DNA ligase (662 aa).

NAD(+) contacts are provided by residues 31–35 and 79–80; these read DKDYD and SL. The active-site N6-AMP-lysine intermediate is the Lys-121. Positions 143, 177, and 313 each coordinate NAD(+). Cys-406, Cys-409, Cys-422, and Cys-428 together coordinate Zn(2+). One can recognise a BRCT domain in the interval 586-662; that stretch reads VLESPFMGKT…LSEEEFENMI (77 aa).

Belongs to the NAD-dependent DNA ligase family. LigA subfamily. Mg(2+) is required as a cofactor. It depends on Mn(2+) as a cofactor.

It catalyses the reaction NAD(+) + (deoxyribonucleotide)n-3'-hydroxyl + 5'-phospho-(deoxyribonucleotide)m = (deoxyribonucleotide)n+m + AMP + beta-nicotinamide D-nucleotide.. Functionally, DNA ligase that catalyzes the formation of phosphodiester linkages between 5'-phosphoryl and 3'-hydroxyl groups in double-stranded DNA using NAD as a coenzyme and as the energy source for the reaction. It is essential for DNA replication and repair of damaged DNA. The chain is DNA ligase from Clostridium perfringens (strain ATCC 13124 / DSM 756 / JCM 1290 / NCIMB 6125 / NCTC 8237 / Type A).